The sequence spans 375 residues: GTPase HflX (375 aa).

The Hflx-type G domain occupies Pro194–Lys371. GTP-binding positions include Gly200–Thr207, Phe225–Thr229, Asp246–Gly249, Asn314–Asp317, and Ser349–Lys351. Mg(2+)-binding residues include Thr207 and Thr227.

The protein belongs to the TRAFAC class OBG-HflX-like GTPase superfamily. HflX GTPase family. As to quaternary structure, monomer. Associates with the 50S ribosomal subunit. It depends on Mg(2+) as a cofactor.

It is found in the cytoplasm. Functionally, GTPase that associates with the 50S ribosomal subunit and may have a role during protein synthesis or ribosome biogenesis. The sequence is that of GTPase HflX from Hyperthermus butylicus (strain DSM 5456 / JCM 9403 / PLM1-5).